The chain runs to 579 residues: Phosphatidylinositol/phosphatidylcholine transfer protein SFH9 (579 aa).

Residues 145 to 319 (EYEEVQQYYP…FLGGNCKCAH (175 aa)) enclose the CRAL-TRIO domain. The segment at 372-419 (DMSSPDGGHVRERESHPEHDKRAQLSNQAEAVGVGRMEQSDSTSPLPN) is disordered. Residues 379–394 (GHVRERESHPEHDKRA) are compositionally biased toward basic and acidic residues. Residues 512 to 539 (QEKEDILRDSLDRIKSIEQDLQKTKKAL) adopt a coiled-coil conformation.

The protein belongs to the SFH family.

Its subcellular location is the golgi apparatus membrane. The protein localises to the cell membrane. Required for transport of secretory proteins from the Golgi complex. Catalyzes the transfer of phosphatidylinositol and phosphatidylcholine between membranes in vitro. The protein is Phosphatidylinositol/phosphatidylcholine transfer protein SFH9 (SFH9) of Arabidopsis thaliana (Mouse-ear cress).